The sequence spans 129 residues: MSQETTATKQEEQKTSELQQQKKEEQKPQQATTTTKEEKKTKPEKENFEMVINFRRVIMGRKTTRTKRAIKYVRYMVKRHFGAEKVIIDPLLAKAITMNGRDKIVRRVRIAVKRIGEKTYLARLAIKSE.

Residues 1-46 form a disordered region; the sequence is MSQETTATKQEEQKTSELQQQKKEEQKPQQATTTTKEEKKTKPEKE. Composition is skewed to basic and acidic residues over residues 9–27 and 35–46; these read KQEEQKTSELQQQKKEEQK and TKEEKKTKPEKE.

Belongs to the eukaryotic ribosomal protein eL31 family.

This Sulfolobus acidocaldarius (strain ATCC 33909 / DSM 639 / JCM 8929 / NBRC 15157 / NCIMB 11770) protein is Large ribosomal subunit protein eL31 (rpl31e).